Here is a 325-residue protein sequence, read N- to C-terminus: Glutarate 2-hydroxylase (325 aa).

Fe cation-binding residues include histidine 160, aspartate 162, and histidine 292.

It belongs to the glutarate hydroxylase family. Homotetramer. Fe(2+) is required as a cofactor.

It carries out the reaction glutarate + 2-oxoglutarate + O2 = (S)-2-hydroxyglutarate + succinate + CO2. It participates in amino-acid degradation. In terms of biological role, acts as an alpha-ketoglutarate-dependent dioxygenase catalyzing hydroxylation of glutarate (GA) to L-2-hydroxyglutarate (L2HG). Functions in a L-lysine degradation pathway that proceeds via cadaverine, glutarate and L-2-hydroxyglutarate. In Escherichia fergusonii (strain ATCC 35469 / DSM 13698 / CCUG 18766 / IAM 14443 / JCM 21226 / LMG 7866 / NBRC 102419 / NCTC 12128 / CDC 0568-73), this protein is Glutarate 2-hydroxylase.